A 188-amino-acid chain; its full sequence is MFTAIWVMVGLAIAIGLILGWSAIRFKVEGNPLAEKIDAILPQTQCGQCGFPGCRPYAEAIAKGEADINQCPPGGEEGVKKLAELLGVEPKPLDEAHGTPKPKSVAFIDEQTCIGCTLCIQACPVDAISGAAKQMHTIIADECTGCELCLAPCPVDCISMVPIAEDLPHWKWKHPVVMMKQVGESTRV.

The segment at 1-23 (MFTAIWVMVGLAIAIGLILGWSA) is hydrophobic. Positions 29-88 (EGNPLAEKIDAILPQTQCGQCGFPGCRPYAEAIAKGEADINQCPPGGEEGVKKLAELLGV) constitute a 4Fe-4S domain. [4Fe-4S] cluster-binding residues include C46, C49, C54, C71, C113, C116, C119, C123, C143, C146, C149, and C153. 4Fe-4S ferredoxin-type domains are found at residues 104–133 (SVAF…GAAK) and 134–163 (QMHT…MVPI).

Belongs to the 4Fe4S bacterial-type ferredoxin family. RnfB subfamily. As to quaternary structure, the complex is composed of six subunits: RnfA, RnfB, RnfC, RnfD, RnfE and RnfG. Requires [4Fe-4S] cluster as cofactor.

Its subcellular location is the cell inner membrane. Functionally, part of a membrane-bound complex that couples electron transfer with translocation of ions across the membrane. This Thiobacillus denitrificans (strain ATCC 25259 / T1) protein is Ion-translocating oxidoreductase complex subunit B.